A 373-amino-acid chain; its full sequence is ATP phosphoribosyltransferase regulatory subunit (373 aa).

The protein belongs to the class-II aminoacyl-tRNA synthetase family. HisZ subfamily. Heteromultimer composed of HisG and HisZ subunits.

It localises to the cytoplasm. It functions in the pathway amino-acid biosynthesis; L-histidine biosynthesis; L-histidine from 5-phospho-alpha-D-ribose 1-diphosphate: step 1/9. In terms of biological role, required for the first step of histidine biosynthesis. May allow the feedback regulation of ATP phosphoribosyltransferase activity by histidine. The sequence is that of ATP phosphoribosyltransferase regulatory subunit from Rhizobium leguminosarum bv. trifolii (strain WSM2304).